The following is a 293-amino-acid chain: ATP synthase gamma chain (293 aa).

Belongs to the ATPase gamma chain family. F-type ATPases have 2 components, CF(1) - the catalytic core - and CF(0) - the membrane proton channel. CF(1) has five subunits: alpha(3), beta(3), gamma(1), delta(1), epsilon(1). CF(0) has three main subunits: a, b and c.

Its subcellular location is the cell membrane. Functionally, produces ATP from ADP in the presence of a proton gradient across the membrane. The gamma chain is believed to be important in regulating ATPase activity and the flow of protons through the CF(0) complex. The chain is ATP synthase gamma chain from Streptococcus gordonii (strain Challis / ATCC 35105 / BCRC 15272 / CH1 / DL1 / V288).